Reading from the N-terminus, the 469-residue chain is Aspartyl/glutamyl-tRNA(Asn/Gln) amidotransferase subunit B (469 aa).

It belongs to the GatB/GatE family. GatB subfamily. As to quaternary structure, heterotrimer of A, B and C subunits.

It carries out the reaction L-glutamyl-tRNA(Gln) + L-glutamine + ATP + H2O = L-glutaminyl-tRNA(Gln) + L-glutamate + ADP + phosphate + H(+). It catalyses the reaction L-aspartyl-tRNA(Asn) + L-glutamine + ATP + H2O = L-asparaginyl-tRNA(Asn) + L-glutamate + ADP + phosphate + 2 H(+). In terms of biological role, allows the formation of correctly charged Asn-tRNA(Asn) or Gln-tRNA(Gln) through the transamidation of misacylated Asp-tRNA(Asn) or Glu-tRNA(Gln) in organisms which lack either or both of asparaginyl-tRNA or glutaminyl-tRNA synthetases. The reaction takes place in the presence of glutamine and ATP through an activated phospho-Asp-tRNA(Asn) or phospho-Glu-tRNA(Gln). In Thermus thermophilus (strain ATCC 27634 / DSM 579 / HB8), this protein is Aspartyl/glutamyl-tRNA(Asn/Gln) amidotransferase subunit B.